Here is a 117-residue protein sequence, read N- to C-terminus: Peptidyl-tRNA hydrolase (117 aa).

Belongs to the PTH2 family.

The protein resides in the cytoplasm. It carries out the reaction an N-acyl-L-alpha-aminoacyl-tRNA + H2O = an N-acyl-L-amino acid + a tRNA + H(+). The natural substrate for this enzyme may be peptidyl-tRNAs which drop off the ribosome during protein synthesis. The polypeptide is Peptidyl-tRNA hydrolase (Thermoplasma volcanium (strain ATCC 51530 / DSM 4299 / JCM 9571 / NBRC 15438 / GSS1)).